A 317-amino-acid polypeptide reads, in one-letter code: Melanocyte-stimulating hormone receptor (317 aa).

At 1-37 (MPVQGSQRRLLGSLNSTPTATPHLGLAANQTGARCLE) the chain is on the extracellular side. N29 carries an N-linked (GlcNAc...) asparagine glycan. The helical transmembrane segment at 38 to 63 (VSIPDGLFLSLGLVSLVENVLVVTAI) threads the bilayer. Topologically, residues 64–72 (AKNRNLHSP) are cytoplasmic. A helical transmembrane segment spans residues 73 to 93 (MYCFICCLALSDLLVSGSNML). Residues 94 to 118 (ETAVILLLEAGALAARAAVVQQLDN) lie on the Extracellular side of the membrane. Residues 119–140 (VIDVITCSSMLSSLCFLGAIAV) form a helical membrane-spanning segment. At 141 to 163 (DRYISIFYALRYHSIVTLPRARR) the chain is on the cytoplasmic side. The chain crosses the membrane as a helical span at residues 164-183 (AVAAIWVASVLFSMLFIAYY). At 184–191 (DHAAVLLC) the chain is on the extracellular side. The helical transmembrane segment at 192–211 (LVVFFLAMLVLMAVLYVHML) threads the bilayer. Residues 212–240 (ARACQHAQGIARLHKRQCPAHQGFGLKGA) are Cytoplasmic-facing. A helical membrane pass occupies residues 241 to 266 (ATLTILLGIFFLCWGPFFLHLTLIVL). At 267 to 279 (CPQHPTCSCIFKN) the chain is on the extracellular side. The helical transmembrane segment at 280–300 (FNLFLALIICNAIIDPLIYAF) threads the bilayer. Residues 301–317 (RSQELRRTLKEVLLCSW) lie on the Cytoplasmic side of the membrane. Residue C315 is the site of S-palmitoyl cysteine attachment.

Belongs to the G-protein coupled receptor 1 family. As to quaternary structure, interacts with MGRN1, but does not undergo MGRN1-mediated ubiquitination; this interaction competes with GNAS-binding and thus inhibits agonist-induced cAMP production. Interacts with OPN3; the interaction results in a decrease in MC1R-mediated cAMP signaling and ultimately a decrease in melanin production in melanocytes.

The protein localises to the cell membrane. Its function is as follows. Receptor for MSH (alpha, beta and gamma) and ACTH. The activity of this receptor is mediated by G proteins which activate adenylate cyclase. Mediates melanogenesis, the production of eumelanin (black/brown) and phaeomelanin (red/yellow), via regulation of cAMP signaling in melanocytes. The chain is Melanocyte-stimulating hormone receptor (MC1R) from Chlorocebus aethiops (Green monkey).